Here is a 161-residue protein sequence, read N- to C-terminus: Putative ecotin-like protein (161 aa).

The N-terminal stretch at 1-24 (MSLRPIETAIASLTMLMLQGCAHA) is a signal peptide.

Belongs to the protease inhibitor I11 (ecotin) family.

In Methylobacillus flagellatus (strain ATCC 51484 / DSM 6875 / VKM B-1610 / KT), this protein is Putative ecotin-like protein.